Consider the following 292-residue polypeptide: Probable alpha-L-glutamate ligase (292 aa).

Residues 104–287 form the ATP-grasp domain; the sequence is HQLLAAKGID…VATRIIEHVE (184 aa). Residues K141, 178–179, D187, and 211–213 each bind ATP; these read EF and RSN. D248, E260, and N262 together coordinate Mg(2+). Mn(2+)-binding residues include D248, E260, and N262.

It belongs to the RimK family. Requires Mg(2+) as cofactor. It depends on Mn(2+) as a cofactor.

This is Probable alpha-L-glutamate ligase from Stenotrophomonas maltophilia (strain K279a).